The primary structure comprises 540 residues: MAAKDVKFGNDARVKMLRGVNVLADAVKVTLGPKGRNVVLDKSFGAPTITKDGVSVAREIELEDKFENMGAQMVKEVASKANDAAGDGTTTATVLAQAIIAEGLKAVAAGMNPMDLKRGIDKAVVAAVEELKTLSVPCSDSKAIAQVGTISANSDETVGKLIAEAMDKVGKEGVITVEDGTGLEDELDVVEGMQFDRGYLSPYFINKPETGAVELESPFILLADKKVSNIREMLPVLEAVAKAGKPLVIIAEDVEGEALATLVVNTMRGIVKVAAVKAPGFGDRRKAMLQDIATLTGGTVISEEIGMELEKATLEDLGQAKRVVINKDTTTIIDGVGEEGAIQGRVAQIRKQIEEATSDYDREKLQERVAKLAGGVAVIKVGAATEVEMKEKKARVDDALHATRAAVEEGVVAGGGVALVRVAAKLAGLTAQNEDQNVGIKVALRAMEAPLRQIVSNAGEEPSVVANNVKAGEGNYGYNAATEEYGNMIDFGILDPTKVTRSALQYAASVAGLMITTECMVTDLPKSDAADLGAAGGMGG.

Residues 30 to 33, Lys51, 87 to 91, Gly415, 479 to 481, and Asp495 contribute to the ATP site; these read TLGP, DGTTT, and NAA.

It belongs to the chaperonin (HSP60) family. In terms of assembly, forms a cylinder of 14 subunits composed of two heptameric rings stacked back-to-back. Interacts with the co-chaperonin GroES.

It localises to the cytoplasm. It catalyses the reaction ATP + H2O + a folded polypeptide = ADP + phosphate + an unfolded polypeptide.. In terms of biological role, together with its co-chaperonin GroES, plays an essential role in assisting protein folding. The GroEL-GroES system forms a nano-cage that allows encapsulation of the non-native substrate proteins and provides a physical environment optimized to promote and accelerate protein folding. The polypeptide is Chaperonin GroEL (Raoultella ornithinolytica (Klebsiella ornithinolytica)).